We begin with the raw amino-acid sequence, 922 residues long: Probable outer membrane protein pmp1 (922 aa).

The first 26 residues, 1–26 (MRFSLCGFPLVFSFTLLSVFDTSLSA), serve as a signal peptide directing secretion. Residues 620–922 (SLQTDRGLWI…NINCGSKFRF (303 aa)) form the Autotransporter domain.

Belongs to the PMP outer membrane protein family.

The protein resides in the secreted. It localises to the cell wall. Its subcellular location is the cell outer membrane. The chain is Probable outer membrane protein pmp1 (pmp1) from Chlamydia pneumoniae (Chlamydophila pneumoniae).